The following is a 592-amino-acid chain: Malic enzyme, hydrogenosomal (592 aa).

Residues 1–27 (MLAPIQTIARPVSSILPATGALAAKRT) constitute a hydrogenosome transit peptide. Residue Y134 is the Proton donor of the active site. Residue 182–205 (VTDGSRILGLGDLGAGGMQIPIGK) participates in NADP(+) binding. R187 lines the NAD(+) pocket. The Proton acceptor role is filled by K205. Residues E276, D277, and D300 each coordinate a divalent metal cation. NAD(+) is bound at residue D300. 335–352 (GAGSSGVGVCETIVDCIV) contacts NADP(+). Position 443 (N443) interacts with NAD(+).

Belongs to the malic enzymes family. It depends on Mg(2+) as a cofactor. The cofactor is Mn(2+).

The protein resides in the hydrogenosome. The enzyme catalyses (S)-malate + NADP(+) = pyruvate + CO2 + NADPH. It catalyses the reaction oxaloacetate + H(+) = pyruvate + CO2. This chain is Malic enzyme, hydrogenosomal, found in Neocallimastix frontalis (Rumen fungus).